The primary structure comprises 280 residues: Formamidopyrimidine-DNA glycosylase (280 aa).

Pro2 (schiff-base intermediate with DNA) is an active-site residue. Residue Glu3 is the Proton donor of the active site. The active-site Proton donor; for beta-elimination activity is the Lys53. His91, Arg110, and Arg152 together coordinate DNA. The FPG-type zinc-finger motif lies at 239–273; sequence HVYGRAGQPCDRCGTPIEKIVLGQRGTHFCPVCQP. The active-site Proton donor; for delta-elimination activity is the Arg263.

Belongs to the FPG family. Monomer. It depends on Zn(2+) as a cofactor.

It catalyses the reaction Hydrolysis of DNA containing ring-opened 7-methylguanine residues, releasing 2,6-diamino-4-hydroxy-5-(N-methyl)formamidopyrimidine.. The enzyme catalyses 2'-deoxyribonucleotide-(2'-deoxyribose 5'-phosphate)-2'-deoxyribonucleotide-DNA = a 3'-end 2'-deoxyribonucleotide-(2,3-dehydro-2,3-deoxyribose 5'-phosphate)-DNA + a 5'-end 5'-phospho-2'-deoxyribonucleoside-DNA + H(+). Functionally, involved in base excision repair of DNA damaged by oxidation or by mutagenic agents. Acts as a DNA glycosylase that recognizes and removes damaged bases. Has a preference for oxidized purines, such as 7,8-dihydro-8-oxoguanine (8-oxoG). Has AP (apurinic/apyrimidinic) lyase activity and introduces nicks in the DNA strand. Cleaves the DNA backbone by beta-delta elimination to generate a single-strand break at the site of the removed base with both 3'- and 5'-phosphates. The sequence is that of Formamidopyrimidine-DNA glycosylase (mutM) from Deinococcus radiodurans (strain ATCC 13939 / DSM 20539 / JCM 16871 / CCUG 27074 / LMG 4051 / NBRC 15346 / NCIMB 9279 / VKM B-1422 / R1).